Here is a 159-residue protein sequence, read N- to C-terminus: MAQGGEINNDNEKPIFAVLTQYLKDLSFENPNAPRSLRPREKSPKIDININVDANPVGDDNYDVVLSLSVKADDDNDILFHVELVYGGVFHIQNIPQEHIMPLVFIECPRLLFPFVRQIISDATQNGGFPPLWIDPIDFVTLFQRRITAEQKDKPTQSS.

The protein belongs to the SecB family. Homotetramer, a dimer of dimers. One homotetramer interacts with 1 SecA dimer.

It is found in the cytoplasm. Its function is as follows. One of the proteins required for the normal export of preproteins out of the cell cytoplasm. It is a molecular chaperone that binds to a subset of precursor proteins, maintaining them in a translocation-competent state. It also specifically binds to its receptor SecA. This chain is Protein-export protein SecB, found in Bartonella bacilliformis (strain ATCC 35685 / KC583 / Herrer 020/F12,63).